The chain runs to 692 residues: MAREFSLEKTRNIGIMAHIDAGKTTTTERILFYTGRIHKIGETHEGASQMDWMEQEQERGITITSAATTAQWKGYRVNIIDTPGHVDFTVEVERSLRVLDGAVAVLDAQSGVEPQTETVWRQATTYGVPRVVFVNKMDKIGADFLYSVGTLRDRLQANAHAIQLPIGAEDNFEGIIDLVENVAYFYEDDLGTRSDAKEIPEEYKEQAEELRSSLIEAVAELDEELMEKYLEGEEITIPELKAAIRKGTLNVEFYPVLVGSAFKNKGVQLVLDAVLDYLPAPTDVAAIKGVRPDTDEEIVRHSSDEEPFSALAFKVMTDPYVGKLTFFRVYSGTLDSGSYVKNSTKGKRERVGRILQMHANSREEISTVYAGDIAAAVGLKDTSTGDTLCDEKDLVILESMEFPEPVIDVAIEPKSKADQDKMGIALAKLAEEDPTFRTQTNPETGQTIISGMGELHLDIIVDRMKREFKVEANVGAPQVAYRETFRTGAKVEGKFVRQSGGRGQFGHVWIEFEPNEEGAGFEFENAIVGGVVPREYIPAVQAGLEDSLENGVLAGFPLIDIKAKLFDGSYHDVDSNEMAFKVAASMALKNAVSKCNPVLLEPIMKVEVVIPEEYMGDIMGDVTSRRGRVEGMEARGNAQVVRAMVPLAEMFGYATALRSNTQGRGTFTMFMDHYEEVPKSIAEEIIKKNKGE.

Residues 8 to 282 (EKTRNIGIMA…AVLDYLPAPT (275 aa)) form the tr-type G domain. GTP is bound by residues 17 to 24 (AHIDAGKT), 81 to 85 (DTPGH), and 135 to 138 (NKMD).

Belongs to the TRAFAC class translation factor GTPase superfamily. Classic translation factor GTPase family. EF-G/EF-2 subfamily.

Its subcellular location is the cytoplasm. Its function is as follows. Catalyzes the GTP-dependent ribosomal translocation step during translation elongation. During this step, the ribosome changes from the pre-translocational (PRE) to the post-translocational (POST) state as the newly formed A-site-bound peptidyl-tRNA and P-site-bound deacylated tRNA move to the P and E sites, respectively. Catalyzes the coordinated movement of the two tRNA molecules, the mRNA and conformational changes in the ribosome. This chain is Elongation factor G, found in Bacillus velezensis (strain DSM 23117 / BGSC 10A6 / LMG 26770 / FZB42) (Bacillus amyloliquefaciens subsp. plantarum).